The following is a 285-amino-acid chain: Complex I assembly factor TIMMDC1, mitochondrial (285 aa).

A run of 4 helical transmembrane segments spans residues 80–100, 137–159, 165–185, and 188–208; these read AALSAGIIGWAYGGIPAFIYA, RWSWRTAVFVTIFNTVNTGLTVY, LSHFAIAGAVTGGLFRINLGL, and LVAGGIIGALLGTPMGSLLMA.

It belongs to the Tim17/Tim22/Tim23 family. As to quaternary structure, associates with the intermediate 315 kDa subcomplex of incompletely assembled complex I. Interacts with TMEM70.

The protein localises to the mitochondrion membrane. In terms of biological role, chaperone protein involved in the assembly of the mitochondrial NADH:ubiquinone oxidoreductase complex (complex I). Participates in constructing the membrane arm of complex I. This Rattus norvegicus (Rat) protein is Complex I assembly factor TIMMDC1, mitochondrial.